The chain runs to 1915 residues: Ankyrin repeat domain-containing protein 36A (1915 aa).

ANK repeat units follow at residues 31–60 (YHLKRIHRAVLHGNLEKLKYLLLTYYDANK), 64–93 (KERTALHLACATGQPEMVHLLVSRRCELNL), 97–126 (EDRTPLIKAVQLRQEACATLLLQNGANPNI), 130–159 (FGRTALHYAVYNEDTSMIEKLLSHGTNIEE), 163–192 (CEYQPLLFAVSRRKVKMVEFLLKKKANVNA), and 196–225 (LGRSALIHAVTLGEKDIVILLLQHNIDVLS). Disordered regions lie at residues 261-331 (PINS…DEQK), 470-619 (ATGQ…QKQS), 639-663 (MGGGKSGTVSSQKQPASKATSDKTD), 676-1203 (LQCG…KATS), and 1285-1304 (KDVQTSTPAEQDLEMASEGE). 2 stretches are compositionally biased toward polar residues: residues 262–272 (INSNPVSSQKQ) and 297–306 (KSGTVSSQKQ). Positions 505-521 (SLTSSEESSERPPLSTL) are enriched in low complexity. Basic and acidic residues-rich tracts occupy residues 551–562 (PAEKATSDDKDS) and 585–596 (PAEKATSDEKDS). 2 stretches are compositionally biased toward polar residues: residues 597–619 (VSNIATEIKKGQQSGTVSPQKQS) and 645–657 (GTVSSQKQPASKA). Basic and acidic residues-rich tracts occupy residues 806 to 815 (RENKDGEKSR), 874 to 883 (RENKDGEKSR), 931 to 951 (SDEKDSFSNITREKKDGEISR), 976 to 985 (RENKDGEKSR), 1044 to 1053 (RENKDGEKSR), 1100 to 1121 (TSDEKDSVLYIAREKKDGEKSR), and 1134 to 1152 (ICDKEDSVPNMATEKKDEQ). Positions 1175–1196 (VSNIPTEIKDGQQSGTVSSQKQ) are enriched in polar residues. 4 coiled-coil regions span residues 1383–1466 (IKLK…TEEQ), 1504–1531 (KEDLLHENRLMQDEIARLRLEKDTIKNQ), 1573–1614 (LAAL…ARCD), and 1727–1814 (NMLL…KRDD). The disordered stretch occupies residues 1489-1508 (KTGGNNSNQVSETDEKEDLL).

Belongs to the ANKRD36 family.

The sequence is that of Ankyrin repeat domain-containing protein 36A (ANKRD36) from Homo sapiens (Human).